A 786-amino-acid polypeptide reads, in one-letter code: MPPKPLFPNVFPGDGAPRKRRLALALLAVPGLVPAVSYAQLSGAAAQPQPLDSPWDLRLAPQLEDHPLKDGAKPAAFVIADHTSGTAEQDLAAKGSAELRRGDAVVKADAIHYDQDTDMADAYGQVKVINGGTSFAGPEAHLKIEANQGFMTAPKYHFNVTGGSGSAERVDMVDNERSVFVNGTYTACQCSTNPAWYIKGSRFDFDTGADEGTARNGVLFFQGVPIFASPWMTFPLSGERRSGLLPPTFSMNSSNGFELSLPYYFNIAPNRDLTLTPRIISRRGVMTEATFRYLSPSYSGTFTANYLPDDRLAHRNRYAIYWQHQQNFGGGFGGYVYYNKVSDNTYPEDLGSANQFINGTQTLYQQEAGLTYNNGPWSVLARYQHWQTLPPSIAPYSREPQLNVKYTKYNVGGFDFGAEADYSRFRITTADATEGDRIVFNPYISYGVYGPGYFVVPKVQYHFASYDLNYLSSTTPNSPKRFTESIPTVTFDTGLIFDRSVRLFGQDFIQTLEPRLYYVYTPYRDQSNAPLFDTAESDFGLAEIYQPNTFVGNDRIADANRITAGLTSRFIDPRTGDERARFVIAQQYYFADQRVTLNPGQAAVLARHSDLIVGAALKLGSGFMSETAFQYNQNNNQLVKSSVGFGYSPGERRVINVGYRYTRANTTLDNQPINQFLVSAQWPLTRRLYAIGRFNYDLAGDRVVDGLVGLQYDADCWALGVGVQRAANGINSSGQQNSSTRFMMQLTLKGLSTVDNGLVSAFRAGVPGYTPLPPPPPPMSRFSNYE.

Residues 1–39 (MPPKPLFPNVFPGDGAPRKRRLALALLAVPGLVPAVSYA) form the signal peptide. Residues 767-786 (PGYTPLPPPPPPMSRFSNYE) form a disordered region. A compositionally biased stretch (pro residues) spans 770–779 (TPLPPPPPPM).

The protein belongs to the LptD family. As to quaternary structure, component of the lipopolysaccharide transport and assembly complex. Interacts with LptE and LptA.

The protein localises to the cell outer membrane. Its function is as follows. Together with LptE, is involved in the assembly of lipopolysaccharide (LPS) at the surface of the outer membrane. The polypeptide is LPS-assembly protein LptD (Burkholderia cenocepacia (strain HI2424)).